A 534-amino-acid polypeptide reads, in one-letter code: Pentatricopeptide repeat-containing protein At1g07590, mitochondrial (534 aa).

Residues 1 to 20 (MRSIIALMRQREYFVQAIRR) constitute a mitochondrion transit peptide. PPR repeat units follow at residues 165-199 (NELLYNNLVIACLDQGVIRLALEYMKKMRELGYRT), 200-234 (SHLVYNRLIIRNSAPGRRKLIAKDLALMKADKATP), 235-269 (HVSTYHILMKLEANEHNIDGVLKAFDGMKKAGVEP), 270-300 (NEVSYCILAMAHAVARLYTVAEAYTEEIEKS), 305-335 (NWSTLDILMILYGRLGKEKELARTWNVIRGF), 339-369 (RSKSYLLATEAFARVGNLDRAEELWLEMKNV), 374-408 (ETEQFNSLLSVYCKDGLIEKAIGVFREMTGNGFKP), 409-443 (NSITYRHLALGCAKAKLMKEALKNIEMGLNLKTSK), and 451-485 (WLETTLSIIECFAEKGDVENSEKLFEEVKNAKYNR).

The protein belongs to the PPR family. P subfamily.

The protein resides in the mitochondrion. This Arabidopsis thaliana (Mouse-ear cress) protein is Pentatricopeptide repeat-containing protein At1g07590, mitochondrial.